The sequence spans 323 residues: Di/tripeptide transport ATP-binding protein DppF (323 aa).

Residues leucine 5–leucine 254 enclose the ABC transporter domain. Glycine 47–serine 54 lines the ATP pocket.

The protein belongs to the ABC transporter superfamily. In terms of assembly, the complex is composed of two ATP-binding proteins (DppD and DppF), two transmembrane proteins (DppB and DppC) and a solute-binding protein (DppA1-A5). Five orthologous SBPs (DppA1-A5) are present in P.aeruginosa, which increases the substrate specificity of the DppBCDF transporter.

It is found in the cell inner membrane. It catalyses the reaction a dipeptide(out) + ATP + H2O = a dipeptide(in) + ADP + phosphate + H(+). Its function is as follows. Part of the ABC transporter DppABCDF involved in the uptake of various di/tripeptides. Is also involved in the uptake of phaseolotoxin, a toxic tripeptide inhibiting the enzyme ornithine carbamoyltransferase. Responsible for energy coupling to the transport system. This Pseudomonas aeruginosa (strain UCBPP-PA14) protein is Di/tripeptide transport ATP-binding protein DppF.